Reading from the N-terminus, the 108-residue chain is Nucleoid-associated protein BAV0915 (108 aa).

The protein belongs to the YbaB/EbfC family. In terms of assembly, homodimer.

The protein resides in the cytoplasm. Its subcellular location is the nucleoid. Functionally, binds to DNA and alters its conformation. May be involved in regulation of gene expression, nucleoid organization and DNA protection. This is Nucleoid-associated protein BAV0915 from Bordetella avium (strain 197N).